Reading from the N-terminus, the 123-residue chain is Large ribosomal subunit protein uL14 (123 aa).

It belongs to the universal ribosomal protein uL14 family. As to quaternary structure, part of the 50S ribosomal subunit. Forms a cluster with proteins L3 and L19. In the 70S ribosome, L14 and L19 interact and together make contacts with the 16S rRNA in bridges B5 and B8.

Functionally, binds to 23S rRNA. Forms part of two intersubunit bridges in the 70S ribosome. This is Large ribosomal subunit protein uL14 from Wigglesworthia glossinidia brevipalpis.